A 201-amino-acid polypeptide reads, in one-letter code: Recombination protein RecR (201 aa).

Residues 60–75 (CSCCGNVDTIDPCTVC) form a C4-type zinc finger. The Toprim domain occupies 83–178 (AVIIVVEDVA…RITRLAHGVP (96 aa)).

The protein belongs to the RecR family.

Its function is as follows. May play a role in DNA repair. It seems to be involved in an RecBC-independent recombinational process of DNA repair. It may act with RecF and RecO. The chain is Recombination protein RecR from Sinorhizobium medicae (strain WSM419) (Ensifer medicae).